A 579-amino-acid chain; its full sequence is 2-succinyl-5-enolpyruvyl-6-hydroxy-3-cyclohexene-1-carboxylate synthase (579 aa).

The protein belongs to the TPP enzyme family. MenD subfamily. As to quaternary structure, homodimer. Mg(2+) serves as cofactor. The cofactor is Mn(2+). Requires thiamine diphosphate as cofactor.

The enzyme catalyses isochorismate + 2-oxoglutarate + H(+) = 5-enolpyruvoyl-6-hydroxy-2-succinyl-cyclohex-3-ene-1-carboxylate + CO2. It functions in the pathway quinol/quinone metabolism; 1,4-dihydroxy-2-naphthoate biosynthesis; 1,4-dihydroxy-2-naphthoate from chorismate: step 2/7. It participates in quinol/quinone metabolism; menaquinone biosynthesis. Catalyzes the thiamine diphosphate-dependent decarboxylation of 2-oxoglutarate and the subsequent addition of the resulting succinic semialdehyde-thiamine pyrophosphate anion to isochorismate to yield 2-succinyl-5-enolpyruvyl-6-hydroxy-3-cyclohexene-1-carboxylate (SEPHCHC). The protein is 2-succinyl-5-enolpyruvyl-6-hydroxy-3-cyclohexene-1-carboxylate synthase of Shewanella frigidimarina (strain NCIMB 400).